Here is a 167-residue protein sequence, read N- to C-terminus: NADH-quinone oxidoreductase subunit B (167 aa).

Residues cysteine 40, cysteine 41, cysteine 105, and cysteine 135 each contribute to the [4Fe-4S] cluster site.

It belongs to the complex I 20 kDa subunit family. As to quaternary structure, NDH-1 is composed of 14 different subunits. Subunits NuoB, C, D, E, F, and G constitute the peripheral sector of the complex. [4Fe-4S] cluster serves as cofactor.

It is found in the cell inner membrane. The enzyme catalyses a quinone + NADH + 5 H(+)(in) = a quinol + NAD(+) + 4 H(+)(out). Functionally, NDH-1 shuttles electrons from NADH, via FMN and iron-sulfur (Fe-S) centers, to quinones in the respiratory chain. The immediate electron acceptor for the enzyme in this species is believed to be ubiquinone. Couples the redox reaction to proton translocation (for every two electrons transferred, four hydrogen ions are translocated across the cytoplasmic membrane), and thus conserves the redox energy in a proton gradient. In Magnetococcus marinus (strain ATCC BAA-1437 / JCM 17883 / MC-1), this protein is NADH-quinone oxidoreductase subunit B.